The chain runs to 390 residues: E3 ubiquitin-protein ligase At4g11680 (390 aa).

Positions 1–19 (MSSSSSTTTNTTTESDSSS) are enriched in low complexity. Residues 1–39 (MSSSSSTTTNTTTESDSSSLPTHIGRSNSDGIIDTTPFL) form a disordered region. 5 consecutive transmembrane segments (helical) span residues 109–129 (VVFL…AVLI), 142–162 (VWVV…CVEY), 212–232 (MFSF…GQTL), 244–264 (IIFL…ACVI), and 265–285 (GLAV…VADQ). The RING-type; atypical zinc-finger motif lies at 338–379 (CCICLCEYEDGVELRELPCNHHFHCTCIDKWLHINSRCPLCK).

It is found in the membrane. The enzyme catalyses S-ubiquitinyl-[E2 ubiquitin-conjugating enzyme]-L-cysteine + [acceptor protein]-L-lysine = [E2 ubiquitin-conjugating enzyme]-L-cysteine + N(6)-ubiquitinyl-[acceptor protein]-L-lysine.. The protein operates within protein modification; protein ubiquitination. Mediates E2-dependent protein ubiquitination in vitro. This Arabidopsis thaliana (Mouse-ear cress) protein is E3 ubiquitin-protein ligase At4g11680.